The primary structure comprises 1396 residues: ATP-binding cassette transporter pdr1 (1396 aa).

Positions 1 to 22 (MSEQEKGKGDLDDPNSKNTKCP) are disordered. An ABC transporter 1 domain is found at 73-320 (LHPINIIFRT…FLDLGFIPAK (248 aa)). An ABC transmembrane type-2 1 domain is found at 412-622 (LQVFATAKVT…GYESIMLNEF (211 aa)). The next 6 helical transmembrane spans lie at 431–451 (YIATFVFTYVFQALMLGSLFY), 466–486 (VLSNAIVFTAIQTMSEVDIIF), 512–532 (LVEFPMRIVVVTMYDIIVYFL), 543–563 (FIFYLFTIVITFCMSAVFRFI), 572–592 (IAALIGGIGALVLIIFCGAVM), and 680–700 (GIILGFAIFILASSLILANFI). The ABC transporter 2 domain occupies 758 to 1001 (LCWRDLNFTV…LVNYFKRIHG (244 aa)). 794–801 (GENKSGKS) serves as a coordination point for ATP. The region spanning 1071-1286 (FQIYKISMRN…FLEGMIGGVL (216 aa)) is the ABC transmembrane type-2 2 domain. 5 helical membrane-spanning segments follow: residues 1095–1115 (VAFNIVAGLIIGFSFYKQGVG), 1166–1186 (FIIAFFLVEAVINCCFATLFF), 1208–1228 (FAWLMLMIFTLYYTTLGIGIA), 1245–1265 (FVFIQYFNGMIQLPGVIVGFW), and 1361–1381 (CIMIGYTAFNLGAAIALYYII).

It belongs to the ABC transporter superfamily. ABCG family. PDR (TC 3.A.1.205) subfamily.

Its subcellular location is the endoplasmic reticulum membrane. The sequence is that of ATP-binding cassette transporter pdr1 (pdr1) from Schizosaccharomyces pombe (strain 972 / ATCC 24843) (Fission yeast).